The sequence spans 87 residues: Protein anon-73B1 (87 aa).

A helical transmembrane segment spans residues 25-47; it reads LLIRYGLYVGALFQFVCISAAVL. The interval 50–87 is disordered; it reads NNPDSQSNPETGEVTEREGEPVRTRLHKIRKLEKKKRR. A compositionally biased stretch (basic and acidic residues) spans 63–72; the sequence is VTEREGEPVR. Basic residues predominate over residues 73-87; the sequence is TRLHKIRKLEKKKRR.

Belongs to the UPF0239 family.

It localises to the membrane. This Drosophila simulans (Fruit fly) protein is Protein anon-73B1 (anon-73B1).